Consider the following 466-residue polypeptide: Paraneoplastic antigen Ma3 homolog (466 aa).

Residues 379–408 (RPYQGSRRRRHRRRGQHRKGGVPRDDSQGT) are disordered. Basic residues predominate over residues 384 to 399 (SRRRRHRRRGQHRKGG). Residues 415 to 432 (TFCYSCGEDGHIRVHCFN) form a CCHC-type zinc finger. Positions 441 to 466 (QKRQAAMEKGNRSWAWEKSHPKPKTK) are disordered. Basic and acidic residues predominate over residues 445–460 (AAMEKGNRSWAWEKSH).

It belongs to the PNMA family. Expressed in the cerebrum and cerebellum.

Its subcellular location is the nucleus. It is found in the nucleolus. In Mus musculus (Mouse), this protein is Paraneoplastic antigen Ma3 homolog (Pnma3).